An 89-amino-acid polypeptide reads, in one-letter code: Meiosis expressed gene 1 protein homolog (89 aa).

Belongs to the MEIG1 family.

The polypeptide is Meiosis expressed gene 1 protein homolog (Nematostella vectensis (Starlet sea anemone)).